The primary structure comprises 466 residues: Asparagine--tRNA ligase (466 aa).

The protein belongs to the class-II aminoacyl-tRNA synthetase family. As to quaternary structure, homodimer.

It is found in the cytoplasm. It catalyses the reaction tRNA(Asn) + L-asparagine + ATP = L-asparaginyl-tRNA(Asn) + AMP + diphosphate + H(+). The chain is Asparagine--tRNA ligase from Syntrophobacter fumaroxidans (strain DSM 10017 / MPOB).